The chain runs to 364 residues: Probable UDP-arabinopyranose mutase 4 (364 aa).

The DXD motif signature appears at 106–108 (DDD). N-linked (Glc...) arginine glycosylation is present at R154.

This sequence belongs to the RGP family. In terms of assembly, heteromers with RGP1 and RGP2. It depends on Mn(2+) as a cofactor. Mg(2+) serves as cofactor. Post-translationally, reversibly glycosylated in vitro by UDP-glucose, UDP-xylose and UDP-galactose, but not UDP-mannose. In terms of tissue distribution, specifically expressed in developing seeds.

It localises to the cytoplasm. The protein resides in the cytosol. The protein localises to the golgi apparatus. It carries out the reaction UDP-beta-L-arabinofuranose = UDP-beta-L-arabinopyranose. In terms of biological role, probable UDP-L-arabinose mutase involved in the biosynthesis of cell wall non-cellulosic polysaccharides. This chain is Probable UDP-arabinopyranose mutase 4, found in Arabidopsis thaliana (Mouse-ear cress).